Consider the following 122-residue polypeptide: Small ribosomal subunit protein bS6 (122 aa).

Residues 99–122 (PSPMMKEVAREEAKKAAAQTEQAA) form a disordered region.

The protein belongs to the bacterial ribosomal protein bS6 family.

Binds together with bS18 to 16S ribosomal RNA. The sequence is that of Small ribosomal subunit protein bS6 from Ralstonia pickettii (strain 12J).